A 509-amino-acid chain; its full sequence is ATP synthase subunit alpha (509 aa).

Gly-169–Thr-176 is a binding site for ATP.

Belongs to the ATPase alpha/beta chains family. F-type ATPases have 2 components, CF(1) - the catalytic core - and CF(0) - the membrane proton channel. CF(1) has five subunits: alpha(3), beta(3), gamma(1), delta(1), epsilon(1). CF(0) has three main subunits: a(1), b(2) and c(9-12). The alpha and beta chains form an alternating ring which encloses part of the gamma chain. CF(1) is attached to CF(0) by a central stalk formed by the gamma and epsilon chains, while a peripheral stalk is formed by the delta and b chains.

The protein resides in the cell inner membrane. The catalysed reaction is ATP + H2O + 4 H(+)(in) = ADP + phosphate + 5 H(+)(out). Its function is as follows. Produces ATP from ADP in the presence of a proton gradient across the membrane. The alpha chain is a regulatory subunit. The protein is ATP synthase subunit alpha of Brucella canis (strain ATCC 23365 / NCTC 10854 / RM-666).